Consider the following 166-residue polypeptide: 16S rRNA aminocarboxypropyltransferase (166 aa).

Thr-17, Ile-62, Leu-84, Tyr-99, and Ser-103 together coordinate S-adenosyl-L-methionine.

Belongs to the TDD superfamily. TSR3 family.

Its subcellular location is the cytoplasm. The enzyme catalyses an N(1)-methylpseudouridine in rRNA + S-adenosyl-L-methionine = N(1)-methyl-N(3)-[(3S)-3-amino-3-carboxypropyl]pseudouridine in rRNA + S-methyl-5'-thioadenosine + H(+). Aminocarboxypropyltransferase that catalyzes the aminocarboxypropyl transfer on pseudouridine corresponding to position 914 in M.jannaschii 16S rRNA. It constitutes the last step in biosynthesis of the hypermodified N1-methyl-N3-(3-amino-3-carboxypropyl) pseudouridine (m1acp3-Psi). The chain is 16S rRNA aminocarboxypropyltransferase from Saccharolobus islandicus (strain Y.N.15.51 / Yellowstone #2) (Sulfolobus islandicus).